A 401-amino-acid chain; its full sequence is 2-amino-3-carboxymuconate-6-semialdehyde decarboxylase (401 aa).

2 residues coordinate Zn(2+): histidine 18 and histidine 20. Substrate is bound at residue arginine 59. Zn(2+)-binding residues include histidine 234 and aspartate 352.

The protein belongs to the metallo-dependent hydrolases superfamily. ACMSD family. Monomer.

It catalyses the reaction 2-amino-3-carboxymuconate 6-semialdehyde + H(+) = 2-aminomuconate 6-semialdehyde + CO2. The protein operates within secondary metabolite metabolism; quinolate metabolism. Functionally, converts alpha-amino-beta-carboxymuconate-epsilon-semialdehyde (ACMS) to alpha-aminomuconate semialdehyde (AMS). This Caenorhabditis elegans protein is 2-amino-3-carboxymuconate-6-semialdehyde decarboxylase.